A 240-amino-acid polypeptide reads, in one-letter code: (DL)-glycerol-3-phosphatase 2 (240 aa).

Asp20 acts as the Nucleophile in catalysis. Residues Asp20, Asp22, and Asp185 each contribute to the Mg(2+) site. Asp22 functions as the Proton donor in the catalytic mechanism.

Belongs to the HAD-like hydrolase superfamily. DOG/GPP family. The cofactor is Mg(2+). In terms of tissue distribution, ubiquitous with highest expression in siliques. Mainly restricted to the meristem of immature flower and vascular elements of the root, shoot, leave, siliqua and developing embryo (at the protein level).

The protein resides in the cytoplasm. It carries out the reaction sn-glycerol 1-phosphate + H2O = glycerol + phosphate. It catalyses the reaction sn-glycerol 3-phosphate + H2O = glycerol + phosphate. Acts as a glycerol-3-phosphatase with higher stereospecificity for L-glycerol-3-phosphate than DL-glycerol-3-phosphate. The chain is (DL)-glycerol-3-phosphatase 2 (GPP2) from Arabidopsis thaliana (Mouse-ear cress).